Here is a 121-residue protein sequence, read N- to C-terminus: Ribonuclease P protein component (121 aa).

This sequence belongs to the RnpA family. As to quaternary structure, consists of a catalytic RNA component (M1 or rnpB) and a protein subunit.

The catalysed reaction is Endonucleolytic cleavage of RNA, removing 5'-extranucleotides from tRNA precursor.. RNaseP catalyzes the removal of the 5'-leader sequence from pre-tRNA to produce the mature 5'-terminus. It can also cleave other RNA substrates such as 4.5S RNA. The protein component plays an auxiliary but essential role in vivo by binding to the 5'-leader sequence and broadening the substrate specificity of the ribozyme. The polypeptide is Ribonuclease P protein component (Lactobacillus delbrueckii subsp. bulgaricus (strain ATCC 11842 / DSM 20081 / BCRC 10696 / JCM 1002 / NBRC 13953 / NCIMB 11778 / NCTC 12712 / WDCM 00102 / Lb 14)).